A 234-amino-acid chain; its full sequence is 2-C-methyl-D-erythritol 4-phosphate cytidylyltransferase (234 aa).

The protein belongs to the IspD/TarI cytidylyltransferase family. IspD subfamily.

The enzyme catalyses 2-C-methyl-D-erythritol 4-phosphate + CTP + H(+) = 4-CDP-2-C-methyl-D-erythritol + diphosphate. Its pathway is isoprenoid biosynthesis; isopentenyl diphosphate biosynthesis via DXP pathway; isopentenyl diphosphate from 1-deoxy-D-xylulose 5-phosphate: step 2/6. In terms of biological role, catalyzes the formation of 4-diphosphocytidyl-2-C-methyl-D-erythritol from CTP and 2-C-methyl-D-erythritol 4-phosphate (MEP). In Pseudomonas paraeruginosa (strain DSM 24068 / PA7) (Pseudomonas aeruginosa (strain PA7)), this protein is 2-C-methyl-D-erythritol 4-phosphate cytidylyltransferase.